The chain runs to 202 residues: LexA repressor (202 aa).

Residues 28-48 constitute a DNA-binding region (H-T-H motif); sequence RAEIAQRLGFRSPNAAEEHLK. Catalysis depends on for autocatalytic cleavage activity residues serine 119 and lysine 156.

This sequence belongs to the peptidase S24 family. In terms of assembly, homodimer.

The enzyme catalyses Hydrolysis of Ala-|-Gly bond in repressor LexA.. Its function is as follows. Represses a number of genes involved in the response to DNA damage (SOS response), including recA and lexA. Binds to the 16 bp palindromic sequence 5'-CTGTATATATATACAG-3'. In the presence of single-stranded DNA, RecA interacts with LexA causing an autocatalytic cleavage which disrupts the DNA-binding part of LexA, leading to derepression of the SOS regulon and eventually DNA repair. The sequence is that of LexA repressor from Enterobacter sp. (strain 638).